The primary structure comprises 421 residues: Plant UBX domain-containing protein 5 (421 aa).

The 42-residue stretch at 4–45 (ETNENLINSFIEITSSSREEANFFLESHTWNLDAAVSTFLDN) folds into the UBA domain. Disordered regions lie at residues 46 to 171 (DAAA…MMVQ) and 292 to 338 (ENFT…PSRG). Over residues 69-84 (QSPSQSHSPDYTPSET) the composition is skewed to polar residues. A compositionally biased stretch (low complexity) spans 85-102 (SPSPSRSRSASPSSRAAP). One can recognise an SEP domain in the interval 231–295 (RIMHTITFWL…DLVRRGENFT (65 aa)). The span at 312–328 (GASGSGSSSAPQASSAP) shows a compositional bias: low complexity. Residues 343–420 (PAAPTTSIQL…GIANAVVIQK (78 aa)) enclose the UBX domain.

Interacts with CDC48A (non-hexameric) via its UBX domain.

The protein is Plant UBX domain-containing protein 5 of Arabidopsis thaliana (Mouse-ear cress).